The following is a 168-amino-acid chain: MIEMEPDTHIISALVEHKPGVLQRVAGLFTRRGFNIENITVGESETPGIARMTIIARGDDRVLEQITKQLNKLIDVIKVRDLEPAATVKRELCMVKVHAPSESERSEIIQYTNIFRGRIVDVSPDALTVEVTGDSEKIDAFLELLRNFGIKELARTGPTAMSRGSRTM.

The ACT domain occupies isoleucine 10–proline 84.

It belongs to the acetolactate synthase small subunit family. Dimer of large and small chains.

The catalysed reaction is 2 pyruvate + H(+) = (2S)-2-acetolactate + CO2. It participates in amino-acid biosynthesis; L-isoleucine biosynthesis; L-isoleucine from 2-oxobutanoate: step 1/4. It functions in the pathway amino-acid biosynthesis; L-valine biosynthesis; L-valine from pyruvate: step 1/4. This Methanothermobacter thermautotrophicus (strain ATCC 29096 / DSM 1053 / JCM 10044 / NBRC 100330 / Delta H) (Methanobacterium thermoautotrophicum) protein is Probable acetolactate synthase small subunit (ilvH).